Here is a 161-residue protein sequence, read N- to C-terminus: Phosphopantetheine adenylyltransferase (161 aa).

Serine 10 is a substrate binding site. ATP contacts are provided by residues 10 to 11 (SF) and histidine 18. Substrate contacts are provided by lysine 42, alanine 75, and arginine 89. Residues 90 to 92 (GLR), glutamate 100, and 125 to 131 (LSPISSS) each bind ATP.

It belongs to the bacterial CoaD family. As to quaternary structure, homohexamer. Requires Mg(2+) as cofactor.

Its subcellular location is the cytoplasm. The enzyme catalyses (R)-4'-phosphopantetheine + ATP + H(+) = 3'-dephospho-CoA + diphosphate. It functions in the pathway cofactor biosynthesis; coenzyme A biosynthesis; CoA from (R)-pantothenate: step 4/5. Its function is as follows. Reversibly transfers an adenylyl group from ATP to 4'-phosphopantetheine, yielding dephospho-CoA (dPCoA) and pyrophosphate. The protein is Phosphopantetheine adenylyltransferase of Streptococcus agalactiae serotype Ia (strain ATCC 27591 / A909 / CDC SS700).